The sequence spans 157 residues: 2-C-methyl-D-erythritol 2,4-cyclodiphosphate synthase (157 aa).

Aspartate 8, histidine 10, and histidine 42 together coordinate a divalent metal cation. 8–10 contacts 4-CDP-2-C-methyl-D-erythritol 2-phosphate; it reads DVH. Residues 56–58, 132–135, phenylalanine 139, and arginine 142 each bind 4-CDP-2-C-methyl-D-erythritol 2-phosphate; these read DIG and STSE.

It belongs to the IspF family. As to quaternary structure, homotrimer. Requires a divalent metal cation as cofactor.

It carries out the reaction 4-CDP-2-C-methyl-D-erythritol 2-phosphate = 2-C-methyl-D-erythritol 2,4-cyclic diphosphate + CMP. It functions in the pathway isoprenoid biosynthesis; isopentenyl diphosphate biosynthesis via DXP pathway; isopentenyl diphosphate from 1-deoxy-D-xylulose 5-phosphate: step 4/6. Its function is as follows. Involved in the biosynthesis of isopentenyl diphosphate (IPP) and dimethylallyl diphosphate (DMAPP), two major building blocks of isoprenoid compounds. Catalyzes the conversion of 4-diphosphocytidyl-2-C-methyl-D-erythritol 2-phosphate (CDP-ME2P) to 2-C-methyl-D-erythritol 2,4-cyclodiphosphate (ME-CPP) with a corresponding release of cytidine 5-monophosphate (CMP). The chain is 2-C-methyl-D-erythritol 2,4-cyclodiphosphate synthase from Dehalococcoides mccartyi (strain ATCC BAA-2266 / KCTC 15142 / 195) (Dehalococcoides ethenogenes (strain 195)).